The following is a 423-amino-acid chain: MVELRQFSDLPIALSGISRIADPSPPPPVVAIRRRFKGGGNTRRIVFSVPLIFAFPFPTGTPKDVLVGIAAVFDGHSGSEASEMASQLLLDYFALHIYFLLDATFSKELTGKLPNSLMHLYDLDSQRFQDSLPLNFHLDILKEALLRAIYDIDATFTKEASTRKLDSGSTATIALIADGQLLVASIGDSKALLCSERYETPEEAKATLIKLYRERKRNQDSSPSRFSDLKLEHRTGLMRFIAKELTKDHHPDREDEMLRVKAAGGYVTKWAGVPRVNGQLAVSRSIGDLTYRSYGVISAPEVMDWQPLVANDSYLVVSSDGIFEKLEVQDACDRLWEVKNQTSFGAGVPSYCSISLADCLVNTAFEKGSMDNMAAVVVPLKSNLDWESQPKEQSVGPSGFKMKNTYALPCEFLSSQPNLFRMG.

The region spanning 52–380 (IFAFPFPTGT…DNMAAVVVPL (329 aa)) is the PPM-type phosphatase domain. 4 residues coordinate Mn(2+): Asp-74, Gly-75, Asp-320, and Asp-371.

This sequence belongs to the PP2C family. Mg(2+) serves as cofactor. Requires Mn(2+) as cofactor.

It carries out the reaction O-phospho-L-seryl-[protein] + H2O = L-seryl-[protein] + phosphate. The catalysed reaction is O-phospho-L-threonyl-[protein] + H2O = L-threonyl-[protein] + phosphate. This chain is Putative protein phosphatase 2C 50, found in Arabidopsis thaliana (Mouse-ear cress).